Consider the following 233-residue polypeptide: Uridylate kinase (233 aa).

9 to 10 contacts ATP; sequence GS. G43 contributes to the UMP binding site. Residues G44 and R48 each contribute to the ATP site. Residues D65 and 113–119 each bind UMP; that span reads VTPGQTT. Residues T139, Y145, and D148 each contribute to the ATP site.

It belongs to the UMP kinase family. In terms of assembly, homohexamer.

The protein resides in the cytoplasm. The catalysed reaction is UMP + ATP = UDP + ADP. It participates in pyrimidine metabolism; CTP biosynthesis via de novo pathway; UDP from UMP (UMPK route): step 1/1. With respect to regulation, inhibited by UTP. Functionally, catalyzes the reversible phosphorylation of UMP to UDP. This chain is Uridylate kinase, found in Methanosarcina acetivorans (strain ATCC 35395 / DSM 2834 / JCM 12185 / C2A).